Consider the following 1111-residue polypeptide: MARSSLPNRRTAQFEANKRRTIAHAPSPSLSNGMHTLTPPTCNNGAATSDSNIHVYVRCRSRNKREIEEKSSVVISTLGPQGKEIILSNGSHQSYSSSKKTYQFDQVFGAESDQETVFNATAKNYIKEMLHGYNCTIFAYGQTGTGKTYTMSGDINILGDVQSTDNLLLGEHAGIIPRVLVDLFKELSSLNKEYSVKISFLELYNENLKDLLSDSEDDDPAVNDPKRQIRIFDNNNNNSSIMVKGMQEIFINSAHEGLNLLMQGSLKRKVAATKCNDLSSRSHTVFTITTNIVEQDSKDHGQNKNFVKIGKLNLVDLAGSENINRSGAENKRAQEAGLINKSLLTLGRVINALVDHSNHIPYRESKLTRLLQDSLGGMTKTCIIATISPAKISMEETASTLEYATRAKSIKNTPQVNQSLSKDTCLKDYIQEIEKLRNDLKNSRNKQGIFITQDQLDLYESNSILIDEQNLKIHNLREQIKKFKENYLNQLDINNLLQSEKEKLIAIIQNFNVDFSNFYSEIQKIHHTNLELMNEVIQQRDFSLENSQKQYNTNQNMQLKISQQVLQTLNTLQGSLNNYNSKCSEVIKGVTEELTRNVNTHKAKHDSTLKSLLNITTNLLMNQMNELVRSISTSLEIFQSDSTSHYRKDLNEIYQSHQQFLKNLQNDIKSCLDSIGSSILTSINEISQNCTTNLNSMNVLIENQQSGSSKLIKEQDLEIKKLKNDLINERRISNQFNQQLAEMKRYFQDHVSRTRSEFHDELNKCIDNLKDKQSKLDQDIWQKTASIFNETDIVVNKIHSDSIASLAHNAENTLKTVSQNNESFTNDLISLSRGMNMDISSKLRSLPINEFLNKISQTICETCGDDNTIASNPVLTSIKKFQNIICSDIALTNEKIMSLIDEIQSQIETISNENNINLIAINENFNSLCNFILTDYDENIMQISKTQDEVLSEHCEKLQSLKILGMDIFTAHSIEKPLHEHTRPEASVIKALPLLDYPKQFQIYRDAENKSKDDTSNSRTCIPNLSTNENFPLSQFSPKTPVPVPDQPLPKVLIPKSINSAKSNRSKTLPNTEGTGRESQNNLKRRFTTEPILKGEETENNDILQNKKLHQ.

A compositionally biased stretch (polar residues) spans 1-11; the sequence is MARSSLPNRRT. Residues 1–34 form a disordered region; it reads MARSSLPNRRTAQFEANKRRTIAHAPSPSLSNGM. The Kinesin motor domain occupies 52 to 410; the sequence is NIHVYVRCRS…LEYATRAKSI (359 aa). 141–148 lines the ATP pocket; that stretch reads GQTGTGKT. 4 coiled-coil regions span residues 424-510, 648-670, 710-780, and 808-828; these read TCLK…IIQN, KDLN…DIKS, KLIK…DQDI, and HNAE…TNDL. The span at 1007-1016 shows a compositional bias: basic and acidic residues; the sequence is AENKSKDDTS. The disordered stretch occupies residues 1007–1111; that stretch reads AENKSKDDTS…DILQNKKLHQ (105 aa). Polar residues-rich tracts occupy residues 1017-1038 and 1057-1082; these read NSRT…QFSP and SINS…SQNN.

The protein belongs to the TRAFAC class myosin-kinesin ATPase superfamily. Kinesin family. BimC subfamily. In terms of assembly, might be dimeric.

The protein localises to the cytoplasm. Its subcellular location is the cytoskeleton. It localises to the spindle. Its function is as follows. Required for assembly of the mitotic spindle. Interacts with spindle microtubules to produce an outwardly directed force acting upon the poles. Following spindle assembly, CIN8 and KIP1 apparently act to oppose a force that draws separated poles back together. This force seems to be mediate by KAR3. This chain is Kinesin-like protein KIP1 (KIP1), found in Saccharomyces cerevisiae (strain ATCC 204508 / S288c) (Baker's yeast).